The following is a 146-amino-acid chain: UPF0735 ACT domain-containing protein Cbei_1295 (146 aa).

Residues 70-145 (TYNIIFKNEK…NVEKVEFIGM (76 aa)) enclose the ACT domain.

The protein belongs to the UPF0735 family.

The polypeptide is UPF0735 ACT domain-containing protein Cbei_1295 (Clostridium beijerinckii (strain ATCC 51743 / NCIMB 8052) (Clostridium acetobutylicum)).